Here is a 618-residue protein sequence, read N- to C-terminus: Serine/threonine-protein kinase pkn1 (618 aa).

In terms of domain architecture, Protein kinase spans 15–381 (YKILCYLRKG…KEEVKPQPLF (367 aa)). ATP is bound by residues 21–29 (LRKGLWCQD) and Lys44.

This sequence belongs to the protein kinase superfamily. Ser/Thr protein kinase family. In terms of processing, autophosphorylated on serine and threonine residues.

It carries out the reaction L-seryl-[protein] + ATP = O-phospho-L-seryl-[protein] + ADP + H(+). The enzyme catalyses L-threonyl-[protein] + ATP = O-phospho-L-threonyl-[protein] + ADP + H(+). In terms of biological role, together with the serine/threonine kinase PknD, may play a role in the specific interactions with host proteins during intracellular growth. The chain is Serine/threonine-protein kinase pkn1 (pkn1) from Chlamydia caviae (strain ATCC VR-813 / DSM 19441 / 03DC25 / GPIC) (Chlamydophila caviae).